Reading from the N-terminus, the 252-residue chain is Serine/threonine phosphatase stp (252 aa).

The segment at 1-22 (MHAEFRTDRGRIRHHNEDNGGV) is disordered. One can recognise a PPM-type phosphatase domain in the interval 2–242 (HAEFRTDRGR…DNITVLLVER (241 aa)). Aspartate 36, glycine 37, aspartate 194, and aspartate 233 together coordinate Mn(2+).

It belongs to the PP2C family. Requires Mn(2+) as cofactor.

It is found in the cytoplasm. Its subcellular location is the membrane. The catalysed reaction is O-phospho-L-seryl-[protein] + H2O = L-seryl-[protein] + phosphate. The enzyme catalyses O-phospho-L-threonyl-[protein] + H2O = L-threonyl-[protein] + phosphate. Protein phosphatase that dephosphorylates EF-Tu. This is Serine/threonine phosphatase stp (stp) from Listeria innocua serovar 6a (strain ATCC BAA-680 / CLIP 11262).